The sequence spans 133 residues: Large ribosomal subunit protein uL16c (133 aa).

This sequence belongs to the universal ribosomal protein uL16 family. In terms of assembly, part of the 50S ribosomal subunit.

Its subcellular location is the plastid. In Euglena longa (Euglenophycean alga), this protein is Large ribosomal subunit protein uL16c.